Consider the following 237-residue polypeptide: Zinc finger AN1 domain-containing stress-associated protein 14 (237 aa).

The tract at residues 1–31 (MATKRKCPANGDDGGVADLEPVAGGSFASPP) is disordered. The segment at 171 to 217 (QPEANRCATCRRKVGLTGFKCRCGGTFCGGHRYADEHGCGFDYKSSG) adopts an AN1-type zinc-finger fold. Residues cysteine 177, cysteine 180, cysteine 191, cysteine 193, cysteine 198, histidine 201, histidine 207, and cysteine 209 each contribute to the Zn(2+) site.

In terms of biological role, may be involved in environmental stress response. The sequence is that of Zinc finger AN1 domain-containing stress-associated protein 14 (SAP14) from Oryza sativa subsp. japonica (Rice).